The chain runs to 290 residues: UPF0761 membrane protein CKO_03126 (290 aa).

The next 6 helical transmembrane spans lie at L44–F64, V104–L124, F140–I160, V183–T203, A210–L230, and V244–L264.

It belongs to the UPF0761 family.

The protein resides in the cell inner membrane. The polypeptide is UPF0761 membrane protein CKO_03126 (Citrobacter koseri (strain ATCC BAA-895 / CDC 4225-83 / SGSC4696)).